Reading from the N-terminus, the 758-residue chain is Spastin (758 aa).

Residues 1 to 103 (MVRTKNQSSS…SPRSGHHHSY (103 aa)) are disordered. Over 1–121 (MVRTKNQSSS…KQNLYVVSFP (121 aa)) the chain is Cytoplasmic. The interval 1–210 (MVRTKNQSSS…RPIQPLEMAA (210 aa)) is required for localization to punctate cytoplasmic foci. Composition is skewed to low complexity over residues 8-28 (SSSS…SSGA), 43-58 (RSSS…AGGS), 66-76 (SSNRRSPGSSP), and 85-95 (TDDLTPTTCSP). Positions 122-142 (IIFLFNVLRSLIYQLFCIFRY) form an intramembrane region, helical. Topologically, residues 143–758 (LYGASTKVIY…WSQDYGDITI (616 aa)) are cytoplasmic. Composition is skewed to polar residues over residues 169–180 (SKEQQQSLNHPS) and 189–198 (QEQQLSNQPQ). The disordered stretch occupies residues 169–202 (SKEQQQSLNHPSELNREGDGQEQQLSNQPQRFRP). The tract at residues 208-758 (MAANRPGGGY…WSQDYGDITI (551 aa)) is sufficient for interaction with microtubules and microtubule severing. The MIT domain maps to 233–308 (HRRAFEYISK…SMARDRLHFL (76 aa)). A compositionally biased stretch (basic and acidic residues) spans 323-339 (KEKQKEEARSKPQKSRE). The tract at residues 323–454 (KEKQKEEARS…GPSGSGASTP (132 aa)) is disordered. Polar residues-rich tracts occupy residues 390–406 (NKSQ…TSVG) and 425–454 (QFSS…ASTP). Residues 443–455 (NNGPSGSGASTPV) form a required for interaction with microtubules region. Residue 523-530 (GPPGNGKT) participates in ATP binding.

The protein belongs to the AAA ATPase family. Spastin subfamily. As to quaternary structure, homohexamer. The homohexamer is stabilized by ATP-binding. The homohexamer may adopt a ring conformation through which microtubules pass prior to being severed. Interacts with microtubules. Interacts with atl; may be involved in microtubule dynamics.

The protein resides in the membrane. It localises to the cytoplasm. The protein localises to the cytoskeleton. Its subcellular location is the microtubule organizing center. It is found in the centrosome. The protein resides in the chromosome. It localises to the lipid droplet. It carries out the reaction n ATP + n H2O + a microtubule = n ADP + n phosphate + (n+1) alpha/beta tubulin heterodimers.. In terms of biological role, ATP-dependent microtubule severing protein. Stimulates microtubule minus-end depolymerization and poleward microtubule flux in the mitotic spindle. Regulates microtubule stability in the neuromuscular junction synapse. Involved in lipid metabolism by regulating the size and distribution of lipid droplets. Involved in axon regeneration by regulating microtubule severing. The sequence is that of Spastin from Drosophila simulans (Fruit fly).